A 215-amino-acid chain; its full sequence is Chaperone protein TorD (215 aa).

This sequence belongs to the TorD/DmsD family. TorD subfamily.

Its subcellular location is the cytoplasm. Its function is as follows. Involved in the biogenesis of TorA. Acts on TorA before the insertion of the molybdenum cofactor and, as a result, probably favors a conformation of the apoenzyme that is competent for acquiring the cofactor. This is Chaperone protein TorD from Aliivibrio salmonicida (strain LFI1238) (Vibrio salmonicida (strain LFI1238)).